A 438-amino-acid chain; its full sequence is MADSCTMTTDLNIPLFERAKAVIPGGVNSPVRAFNAVGGTPRFVRRAQGAHFWDENAQQFTDYIGSWGPMILGHGHPEVMAAVQAAALEGFSFGAPTEREVVLAEKILSLMPSMDMVRMVSSGTEAGMSALRLARGFTGRNKIIKFNGCYHGHADALLVKAGSGLATFGASSSAGVPQDVVKDTVVLEYNDVGQLEEAFAQFGDQIACVIMEPIAGNMNFVRASVPFTRRIRELTREHGALMVYDEVMTGFRVALGSAQSLYAQHIEGFAPDITVLGKVIGGGMPMAAFGARREIMEKLSPLGPVYQAGTLSGNPIATACGLKTLELISEPGFHDALHAKTGRLMAGFKAEADAAGVPFSVDHQGGLFGFYLLPELPSTWTEVMKTDGARFNRFFHGMLERGHYFAPALYEAGFVSAAHTDADIDKTIEAAREVFKTL.

Residue K278 is modified to N6-(pyridoxal phosphate)lysine.

The protein belongs to the class-III pyridoxal-phosphate-dependent aminotransferase family. HemL subfamily. In terms of assembly, homodimer. Pyridoxal 5'-phosphate is required as a cofactor.

Its subcellular location is the cytoplasm. The catalysed reaction is (S)-4-amino-5-oxopentanoate = 5-aminolevulinate. It participates in porphyrin-containing compound metabolism; protoporphyrin-IX biosynthesis; 5-aminolevulinate from L-glutamyl-tRNA(Glu): step 2/2. The protein is Glutamate-1-semialdehyde 2,1-aminomutase of Delftia acidovorans (strain DSM 14801 / SPH-1).